The following is a 207-amino-acid chain: MPKINILNQQGDFVSEKVLATTVFDIKPNQQVLYDVVNAQRAAMRQGTHATKTRALVAGGGKKPWRQKGTGRARHGSIRSPLWRGGGVTFGPSPRDYSVKVNQKVRSLALKSALSLQAKNNQLVVVDNINLATHKTKDFQQMLQKLNITSKSLIVVTQMTEQLALASRNLSYITLETASHASVYQILNCKQLVLTAAAVNYFEEVLK.

Positions 57–78 (VAGGGKKPWRQKGTGRARHGSI) are disordered. Over residues 63-77 (KPWRQKGTGRARHGS) the composition is skewed to basic residues.

Belongs to the universal ribosomal protein uL4 family. Part of the 50S ribosomal subunit.

Functionally, one of the primary rRNA binding proteins, this protein initially binds near the 5'-end of the 23S rRNA. It is important during the early stages of 50S assembly. It makes multiple contacts with different domains of the 23S rRNA in the assembled 50S subunit and ribosome. Its function is as follows. Forms part of the polypeptide exit tunnel. The protein is Large ribosomal subunit protein uL4 of Onion yellows phytoplasma (strain OY-M).